The following is a 192-amino-acid chain: Crossover junction endodeoxyribonuclease RuvC (192 aa).

Catalysis depends on residues aspartate 7, glutamate 67, and aspartate 140. Mg(2+) contacts are provided by aspartate 7, glutamate 67, and aspartate 140. Residues 158 to 192 are disordered; that stretch reads RQSGVPPRTNSRRKSGTGGSWEQFVRQSPNVVVRS. Positions 182–192 are enriched in polar residues; the sequence is VRQSPNVVVRS.

Belongs to the RuvC family. As to quaternary structure, homodimer which binds Holliday junction (HJ) DNA. The HJ becomes 2-fold symmetrical on binding to RuvC with unstacked arms; it has a different conformation from HJ DNA in complex with RuvA. In the full resolvosome a probable DNA-RuvA(4)-RuvB(12)-RuvC(2) complex forms which resolves the HJ. Mg(2+) is required as a cofactor.

The protein resides in the cytoplasm. The catalysed reaction is Endonucleolytic cleavage at a junction such as a reciprocal single-stranded crossover between two homologous DNA duplexes (Holliday junction).. Its function is as follows. The RuvA-RuvB-RuvC complex processes Holliday junction (HJ) DNA during genetic recombination and DNA repair. Endonuclease that resolves HJ intermediates. Cleaves cruciform DNA by making single-stranded nicks across the HJ at symmetrical positions within the homologous arms, yielding a 5'-phosphate and a 3'-hydroxyl group; requires a central core of homology in the junction. The consensus cleavage sequence is 5'-(A/T)TT(C/G)-3'. Cleavage occurs on the 3'-side of the TT dinucleotide at the point of strand exchange. HJ branch migration catalyzed by RuvA-RuvB allows RuvC to scan DNA until it finds its consensus sequence, where it cleaves and resolves the cruciform DNA. This chain is Crossover junction endodeoxyribonuclease RuvC, found in Chlorobium chlorochromatii (strain CaD3).